The sequence spans 676 residues: Mediator of RNA polymerase II transcription subunit 17 (676 aa).

2 disordered regions span residues 27–68 (IGSK…QFSN) and 117–176 (IEND…TQDT). Low complexity predominate over residues 29–40 (SKSTSPHSNSTS). Basic and acidic residues-rich tracts occupy residues 47 to 56 (HNTENEEVDN) and 120 to 134 (DNGKQESKDDTKAED). Residues 135 to 145 (GIDTMDIDQND) show a composition bias toward acidic residues. Residues 146–160 (NSEANTNDIGYNEWS) show a composition bias toward polar residues.

This sequence belongs to the Mediator complex subunit 17 family. Component of the Mediator complex.

It is found in the nucleus. In terms of biological role, component of the Mediator complex, a coactivator involved in the regulated transcription of nearly all RNA polymerase II-dependent genes. Mediator functions as a bridge to convey information from gene-specific regulatory proteins to the basal RNA polymerase II transcription machinery. Mediator is recruited to promoters by direct interactions with regulatory proteins and serves as a scaffold for the assembly of a functional preinitiation complex with RNA polymerase II and the general transcription factors. This chain is Mediator of RNA polymerase II transcription subunit 17 (SRB4), found in Candida glabrata (strain ATCC 2001 / BCRC 20586 / JCM 3761 / NBRC 0622 / NRRL Y-65 / CBS 138) (Yeast).